The chain runs to 154 residues: Interleukin-2 (154 aa).

Positions 1-20 are cleaved as a signal peptide; the sequence is MYKMQLLSCIALTLALVANG. T23 carries O-linked (GalNAc...) threonine glycosylation. C78 and C126 form a disulfide bridge.

This sequence belongs to the IL-2 family.

The protein resides in the secreted. Its function is as follows. Cytokine produced by activated CD4-positive helper T-cells and to a lesser extend activated CD8-positive T-cells and natural killer (NK) cells that plays pivotal roles in the immune response and tolerance. Binds to a receptor complex composed of either the high-affinity trimeric IL-2R (IL2RA/CD25, IL2RB/CD122 and IL2RG/CD132) or the low-affinity dimeric IL-2R (IL2RB and IL2RG). Interaction with the receptor leads to oligomerization and conformation changes in the IL-2R subunits resulting in downstream signaling starting with phosphorylation of JAK1 and JAK3. In turn, JAK1 and JAK3 phosphorylate the receptor to form a docking site leading to the phosphorylation of several substrates including STAT5. This process leads to activation of several pathways including STAT, phosphoinositide-3-kinase/PI3K and mitogen-activated protein kinase/MAPK pathways. Functions as a T-cell growth factor and can increase NK-cell cytolytic activity as well. Promotes strong proliferation of activated B-cells and subsequently immunoglobulin production. Plays a pivotal role in regulating the adaptive immune system by controlling the survival and proliferation of regulatory T-cells, which are required for the maintenance of immune tolerance. Moreover, participates in the differentiation and homeostasis of effector T-cell subsets, including Th1, Th2, Th17 as well as memory CD8-positive T-cells. This chain is Interleukin-2 (IL2), found in Delphinapterus leucas (Beluga whale).